A 412-amino-acid polypeptide reads, in one-letter code: Polyferredoxin protein MvhB (412 aa).

4Fe-4S ferredoxin-type domains lie at 1 to 29 (MIVV…VTPE), 30 to 57 (DVIY…IEDL), 67 to 96 (GRIV…LDEG), 97 to 127 (KVKK…VEGI), 138 to 166 (EGPI…LEKV), 168 to 197 (GVIE…ISGK), 207 to 236 (RKFE…PKSS), 238 to 266 (LTVE…LDVE), 276 to 305 (EGLV…VVTR), 314 to 345 (EKVD…LVDM), 357 to 386 (KRVQ…LTDE), and 385 to 412 (DEKV…LSLK). Positions 9, 12, 15, and 19 each coordinate [4Fe-4S] cluster. 24 residues coordinate [4Fe-4S] cluster: Cys-76, Cys-79, Cys-82, Cys-86, Cys-107, Cys-110, Cys-113, Cys-117, Cys-146, Cys-149, Cys-152, Cys-156, Cys-177, Cys-180, Cys-183, Cys-187, Cys-216, Cys-219, Cys-222, Cys-226, Cys-246, Cys-249, Cys-252, and Cys-256. Residues Cys-325, Cys-328, Cys-331, Cys-335, Cys-366, Cys-369, Cys-372, Cys-376, Cys-394, Cys-397, Cys-400, and Cys-404 each contribute to the [4Fe-4S] cluster site.

It depends on [4Fe-4S] cluster as a cofactor.

In Methanothermobacter marburgensis (strain ATCC BAA-927 / DSM 2133 / JCM 14651 / NBRC 100331 / OCM 82 / Marburg) (Methanobacterium thermoautotrophicum), this protein is Polyferredoxin protein MvhB (mvhB).